The following is a 226-amino-acid chain: ATP-dependent dethiobiotin synthetase BioD (226 aa).

14 to 19 (GIGKTF) is an ATP binding site. Threonine 18 contacts Mg(2+). The active site involves lysine 39. Serine 43 is a binding site for substrate. Residues aspartate 56, 117 to 120 (EGVG), 177 to 178 (NT), 206 to 208 (PHI), and asparagine 213 each bind ATP. Mg(2+)-binding residues include aspartate 56 and glutamate 117.

This sequence belongs to the dethiobiotin synthetase family. In terms of assembly, homodimer. It depends on Mg(2+) as a cofactor.

It localises to the cytoplasm. It catalyses the reaction (7R,8S)-7,8-diammoniononanoate + CO2 + ATP = (4R,5S)-dethiobiotin + ADP + phosphate + 3 H(+). It participates in cofactor biosynthesis; biotin biosynthesis; biotin from 7,8-diaminononanoate: step 1/2. In terms of biological role, catalyzes a mechanistically unusual reaction, the ATP-dependent insertion of CO2 between the N7 and N8 nitrogen atoms of 7,8-diaminopelargonic acid (DAPA, also called 7,8-diammoniononanoate) to form a ureido ring. The chain is ATP-dependent dethiobiotin synthetase BioD from Xylella fastidiosa (strain Temecula1 / ATCC 700964).